We begin with the raw amino-acid sequence, 106 residues long: Minor capsid protein VP2 (106 aa).

Belongs to the vesivirus VP2 protein family. Homooligomer. The portal-like structure consists in 12 copies of VP2. Interacts with capsid protein VP1.

It localises to the virion. It is found in the host cytoplasm. In terms of biological role, minor structural protein that forms a portal-like structure at a unique three-fold axis of symmetry, following binding to the host receptor. The virion attaches to feline junctional adhesion molecule A (F11R). Once attached, the virion is endocytosed. Acidification of the endosome induces conformational change of capsid protein thereby injecting virus genomic RNA into host cytoplasm. The channel formed by VP2 may allow the delivery of the viral genome through the host endosomal membrane. The protein is Minor capsid protein VP2 of Feline calicivirus (strain CFI/68 FIV) (FCV).